Reading from the N-terminus, the 190-residue chain is Molybdenum cofactor guanylyltransferase (190 aa).

Residues 8–10 (LAG), K20, D64, and D98 contribute to the GTP site. D98 provides a ligand contact to Mg(2+).

Belongs to the MobA family. Monomer. It depends on Mg(2+) as a cofactor.

The protein resides in the cytoplasm. It catalyses the reaction Mo-molybdopterin + GTP + H(+) = Mo-molybdopterin guanine dinucleotide + diphosphate. Its function is as follows. Transfers a GMP moiety from GTP to Mo-molybdopterin (Mo-MPT) cofactor (Moco or molybdenum cofactor) to form Mo-molybdopterin guanine dinucleotide (Mo-MGD) cofactor. This chain is Molybdenum cofactor guanylyltransferase, found in Rhodobacter capsulatus (Rhodopseudomonas capsulata).